A 204-amino-acid polypeptide reads, in one-letter code: MPSFLRGILKPKERHHENKNHSQMSSDSLTSSYPTSPPKLEKTEAGSIVSSTTQKKTSHHAKPTITTKTEQSQRRPKIIDQVRRVESLGEQVSQKQRHMLESLINKVYTGPLGEELVQTLYLRIWAMKETPESTKILQMREDIRDQYLRMKTERWLRTLIRGKKTKLRDFQKRYEEVHPYLMIERVEQIIMEEAWKLAAHIVQE.

The tract at residues 1-78 (MPSFLRGILK…TEQSQRRPKI (78 aa)) is disordered. Residues 10 to 20 (KPKERHHENKN) are compositionally biased toward basic and acidic residues. Positions 25–34 (SSDSLTSSYP) are enriched in low complexity.

It belongs to the respirovirus protein C family.

The polypeptide is Protein C (P/V/C) (Homo sapiens (Human)).